The following is a 248-amino-acid chain: uncharacterized protein (248 aa).

Position 141 (Ser141) interacts with substrate. Residue Tyr154 is the Proton acceptor of the active site.

The protein belongs to the short-chain dehydrogenases/reductases (SDR) family.

This is an uncharacterized protein from Methylorubrum extorquens (strain ATCC 14718 / DSM 1338 / JCM 2805 / NCIMB 9133 / AM1) (Methylobacterium extorquens).